A 218-amino-acid chain; its full sequence is 23 kDa integral membrane protein (218 aa).

Residues 1-12 (MATLGTGMRCLK) lie on the Cytoplasmic side of the membrane. Residues 13 to 36 (SCVFILNIICLLCSLVLIGAGAYV) form a helical membrane-spanning segment. Residues 37-55 (EVKFSQYEANLHKVWQAAP) are Extracellular-facing. A helical transmembrane segment spans residues 56-71 (IAIIVVGVVILIVSFL). Residues 72-82 (GCCGAIKENVC) lie on the Cytoplasmic side of the membrane. A helical transmembrane segment spans residues 83 to 108 (MLYMYAFFLIVLLIAELVAAIVAVVY). Topologically, residues 109-183 (KDKIDDEINT…SVFSAFLKRN (75 aa)) are extracellular. Residues 184–205 (LIIVACVAFGVCFFQLLSIVIA) form a helical membrane-spanning segment. Residues 206 to 218 (CCLGQRIHDYQNV) are Cytoplasmic-facing.

Belongs to the tetraspanin (TM4SF) family.

It localises to the membrane. This Schistosoma japonicum (Blood fluke) protein is 23 kDa integral membrane protein.